Consider the following 215-residue polypeptide: Pyrrolidone-carboxylate peptidase (215 aa).

Residues Glu-80, Cys-143, and His-167 contribute to the active site.

It belongs to the peptidase C15 family. As to quaternary structure, homotetramer.

The protein resides in the cytoplasm. It catalyses the reaction Release of an N-terminal pyroglutamyl group from a polypeptide, the second amino acid generally not being Pro.. Its function is as follows. Removes 5-oxoproline from various penultimate amino acid residues except L-proline. In Yersinia pseudotuberculosis serotype O:3 (strain YPIII), this protein is Pyrrolidone-carboxylate peptidase.